A 360-amino-acid polypeptide reads, in one-letter code: Phospho-N-acetylmuramoyl-pentapeptide-transferase (360 aa).

Helical transmembrane passes span 27–47, 72–92, 94–114, 132–152, 168–188, 199–219, 236–256, 263–283, 288–308, and 338–358; these read IVSL…LIAW, PTMG…MWAY, SNPY…VGFI, WKYF…YSIG, IMPQ…VGTS, GLAI…AWAT, AGEL…FLWF, VFMG…IAVL, FLLV…ILQV, and VIVR…ATLK.

It belongs to the glycosyltransferase 4 family. MraY subfamily. Mg(2+) is required as a cofactor.

The protein localises to the cell inner membrane. The catalysed reaction is UDP-N-acetyl-alpha-D-muramoyl-L-alanyl-gamma-D-glutamyl-meso-2,6-diaminopimeloyl-D-alanyl-D-alanine + di-trans,octa-cis-undecaprenyl phosphate = di-trans,octa-cis-undecaprenyl diphospho-N-acetyl-alpha-D-muramoyl-L-alanyl-D-glutamyl-meso-2,6-diaminopimeloyl-D-alanyl-D-alanine + UMP. It functions in the pathway cell wall biogenesis; peptidoglycan biosynthesis. Its function is as follows. Catalyzes the initial step of the lipid cycle reactions in the biosynthesis of the cell wall peptidoglycan: transfers peptidoglycan precursor phospho-MurNAc-pentapeptide from UDP-MurNAc-pentapeptide onto the lipid carrier undecaprenyl phosphate, yielding undecaprenyl-pyrophosphoryl-MurNAc-pentapeptide, known as lipid I. The protein is Phospho-N-acetylmuramoyl-pentapeptide-transferase of Yersinia pseudotuberculosis serotype O:1b (strain IP 31758).